The chain runs to 1001 residues: E3 ubiquitin-protein ligase BRE1B (1001 aa).

The interval 1–40 (MSGLSNKRAAGDGGSGPPEKKMNREEKTTTTLIEPIRLGG) is disordered. A compositionally biased stretch (basic and acidic residues) spans 18-28 (PEKKMNREEKT). N6-acetyllysine is present on lysine 20. Serine 42 carries the phosphoserine modification. A coiled-coil region spans residues 55–91 (KNKKLAERLEQRQACEDELRERIEKLEKRQATDDATL). The disordered stretch occupies residues 122–142 (TEVPGCQEGLTRDVIPRPDPG). 2 coiled-coil regions span residues 189-377 (KAAV…LRSL) and 437-525 (LQKK…ASGS). N6-acetyllysine occurs at positions 355 and 517. The disordered stretch occupies residues 519–647 (RAQASGSSHC…KAKVEEAKRK (129 aa)). Residues 565 to 576 (ALLAGATSATSS) show a composition bias toward low complexity. Glycyl lysine isopeptide (Lys-Gly) (interchain with G-Cter in SUMO2) cross-links involve residues lysine 578 and lysine 579. Phosphoserine occurs at positions 584 and 585. Composition is skewed to basic and acidic residues over residues 602–619 (RGRE…EREG) and 633–647 (RADR…AKRK). A coiled-coil region spans residues 627-946 (AASTLSRADR…EEIKEYKARL (320 aa)). The RING-type zinc finger occupies 948 to 987 (CPCCNTRKKDAVLTKCFHVFCFECVRGRYEARQRKCPKCN).

This sequence belongs to the BRE1 family. In terms of assembly, component of the RNF20/40 complex (also known as BRE1 complex) probably composed of 2 copies of RNF20/BRE1A and 2 copies of RNF40/BRE1B. Interacts with UBE2E1/UBCH6. Interacts with RB1 and WAC.

The protein localises to the nucleus. The catalysed reaction is S-ubiquitinyl-[E2 ubiquitin-conjugating enzyme]-L-cysteine + [acceptor protein]-L-lysine = [E2 ubiquitin-conjugating enzyme]-L-cysteine + N(6)-ubiquitinyl-[acceptor protein]-L-lysine.. It participates in protein modification; protein ubiquitination. Component of the RNF20/40 E3 ubiquitin-protein ligase complex that mediates monoubiquitination of 'Lys-120' of histone H2B (H2BK120ub1). H2BK120ub1 gives a specific tag for epigenetic transcriptional activation and is also prerequisite for histone H3 'Lys-4' and 'Lys-79' methylation (H3K4me and H3K79me, respectively). It thereby plays a central role in histone code and gene regulation. The RNF20/40 complex forms a H2B ubiquitin ligase complex in cooperation with the E2 enzyme UBE2A or UBE2B; reports about the cooperation with UBE2E1/UBCH are contradictory. Required for transcriptional activation of Hox genes. The sequence is that of E3 ubiquitin-protein ligase BRE1B (Rnf40) from Mus musculus (Mouse).